The sequence spans 188 residues: Trafficking protein particle complex subunit 5 (188 aa).

A Phosphoserine modification is found at S10.

It belongs to the TRAPP small subunits family. BET3 subfamily. As to quaternary structure, component of the multisubunit TRAPP (transport protein particle) complex, which includes at least TRAPPC2, TRAPPC2L, TRAPPC3, TRAPPC3L, TRAPPC4, TRAPPC5, TRAPPC8, TRAPPC9, TRAPPC10, TRAPPC11 and TRAPPC12.

The protein resides in the golgi apparatus. It localises to the cis-Golgi network. It is found in the endoplasmic reticulum. In terms of biological role, may play a role in vesicular transport from endoplasmic reticulum to Golgi. In Bos taurus (Bovine), this protein is Trafficking protein particle complex subunit 5 (TRAPPC5).